The chain runs to 435 residues: Transforming growth factor beta-2 proprotein (435 aa).

A signal peptide spans 1-20 (MHYCVLSAFLLLHLVTVALS). Residues Asn-72, Asn-140, and Asn-241 are each glycosylated (N-linked (GlcNAc...) asparagine). Disulfide bonds link Cys-309–Cys-318, Cys-317–Cys-380, Cys-346–Cys-411, and Cys-350–Cys-413.

This sequence belongs to the TGF-beta family. As to quaternary structure, interacts with the serine proteases, HTRA1 and HTRA3. Interacts with ASPN. Interacts with MFAP5. Interacts with Transforming growth factor beta-2 (TGF-beta-2) chain; interaction is non-covalent and maintains (TGF-beta-2) in a latent state. Interacts with LRRC32/GARP; leading to regulate activation of TGF-beta-2. Interacts with NREP; the interaction results in a decrease in TGFB2 autoinduction. In terms of assembly, transforming growth factor beta-2: Homodimer; disulfide-linked. Transforming growth factor beta-2: Interacts with TGF-beta receptors (TGFBR1 and TGFBR2), leading to signal transduction. The precursor proprotein is cleaved in the Golgi apparatus to form Transforming growth factor beta-2 (TGF-beta-2) and Latency-associated peptide (LAP) chains, which remain non-covalently linked, rendering TGF-beta-2 inactive.

It localises to the secreted. The protein resides in the extracellular space. It is found in the extracellular matrix. In terms of biological role, precursor of the Latency-associated peptide (LAP) and Transforming growth factor beta-2 (TGF-beta-2) chains, which constitute the regulatory and active subunit of TGF-beta-2, respectively. Required to maintain the Transforming growth factor beta-2 (TGF-beta-2) chain in a latent state during storage in extracellular matrix. Associates non-covalently with TGF-beta-2 and regulates its activation via interaction with 'milieu molecules', such as LTBP1 and LRRC32/GARP, that control activation of TGF-beta-2. Its function is as follows. Multifunctional protein that regulates various processes such as angiogenesis and heart development. Activation into mature form follows different steps: following cleavage of the proprotein in the Golgi apparatus, Latency-associated peptide (LAP) and Transforming growth factor beta-2 (TGF-beta-2) chains remain non-covalently linked rendering TGF-beta-2 inactive during storage in extracellular matrix. At the same time, LAP chain interacts with 'milieu molecules', such as LTBP1 and LRRC32/GARP, that control activation of TGF-beta-2 and maintain it in a latent state during storage in extracellular milieus. Once activated following release of LAP, TGF-beta-2 acts by binding to TGF-beta receptors (TGFBR1 and TGFBR2), which transduce signal. This chain is Transforming growth factor beta-2 proprotein (TGFB2), found in Sus scrofa (Pig).